A 414-amino-acid polypeptide reads, in one-letter code: Translation initiation factor 2 subunit gamma (414 aa).

In terms of domain architecture, tr-type G spans 7-204; it reads QPEVNIGLVG…ALQTEIATPD (198 aa). Residues 16–23 are G1; the sequence is GHVDHGKT. The Mg(2+) site is built by Asp-19, Thr-23, Gly-44, and Ser-46. 19–24 is a binding site for GTP; that stretch reads DHGKTT. Positions 44–48 are G2; it reads GISIR. A G3 region spans residues 91-94; it reads DAPG. Residues 147-150 and 182-184 each bind GTP; these read NKVD and SAE. The tract at residues 147 to 150 is G4; the sequence is NKVD. A G5 region spans residues 182-184; sequence SAE.

The protein belongs to the TRAFAC class translation factor GTPase superfamily. Classic translation factor GTPase family. EIF2G subfamily. In terms of assembly, heterotrimer composed of an alpha, a beta and a gamma chain. Requires Mg(2+) as cofactor.

It catalyses the reaction GTP + H2O = GDP + phosphate + H(+). In terms of biological role, eIF-2 functions in the early steps of protein synthesis by forming a ternary complex with GTP and initiator tRNA. This Halobacterium salinarum (strain ATCC 29341 / DSM 671 / R1) protein is Translation initiation factor 2 subunit gamma.